A 208-amino-acid chain; its full sequence is FMN-dependent NADH:quinone oxidoreductase 1 (208 aa).

17–19 (SVS) lines the FMN pocket.

This sequence belongs to the azoreductase type 1 family. Homodimer. FMN serves as cofactor.

The catalysed reaction is 2 a quinone + NADH + H(+) = 2 a 1,4-benzosemiquinone + NAD(+). It catalyses the reaction N,N-dimethyl-1,4-phenylenediamine + anthranilate + 2 NAD(+) = 2-(4-dimethylaminophenyl)diazenylbenzoate + 2 NADH + 2 H(+). Quinone reductase that provides resistance to thiol-specific stress caused by electrophilic quinones. Functionally, also exhibits azoreductase activity. Catalyzes the reductive cleavage of the azo bond in aromatic azo compounds to the corresponding amines. The chain is FMN-dependent NADH:quinone oxidoreductase 1 from Listeria monocytogenes serotype 4b (strain F2365).